A 507-amino-acid chain; its full sequence is Acetylcholine receptor subunit beta-type lev-1 (507 aa).

A signal peptide spans 1-31 (MMLGGGGGCGAGGTWLGFLVFLAVSLRNHST). Residues N28, N58, and N109 are each glycosylated (N-linked (GlcNAc...) asparagine). At 32–138 (CEDIDAEDRL…NNADGNYEVS (107 aa)) the chain is on the extracellular side. A helical membrane pass occupies residues 139-159 (FMCNVLILSTGTVLWVPPAIY). Cysteines 163 and 177 form a disulfide. The next 3 membrane-spanning stretches (helical) occupy residues 243–263 (VVLILPTVLMAFLNVTVFYLP), 271–291 (GLTMNVLLSIVVFLLLVSKIL), and 305–325 (LLLTFVLNIITIMVTTIICNI). Positions 373-392 (GPSVEENPMRSGEHHPLCRH) are disordered. Residues 379–392 (NPMRSGEHHPLCRH) show a composition bias toward basic and acidic residues. Residues 454–474 (FLLYGFFGATVGGTIGIIFTA) traverse the membrane as a helical segment.

The protein belongs to the ligand-gated ion channel (TC 1.A.9) family. Acetylcholine receptor (TC 1.A.9.1) subfamily. As to quaternary structure, interacts with unc-29. Component of nicotinic acetylcholine receptor composed of 2 non-alpha subunits lev-1 and unc-29, and 3 alpha subunits unc-38, unc-63 and lev-8.

The protein localises to the postsynaptic cell membrane. Its subcellular location is the cell membrane. Its function is as follows. Non-alpha subunit of nicotinic acetylcholine receptor (nAChR). Involved in nAChR sensitivity to nicotine. The protein is Acetylcholine receptor subunit beta-type lev-1 (lev-1) of Caenorhabditis elegans.